Consider the following 1062-residue polypeptide: NACHT, LRR and PYD domains-containing protein 2 (1062 aa).

In terms of domain architecture, Pyrin spans 1–94 (MVSSAQMGFN…SERAKDEVRE (94 aa)). The region spanning 207–526 (YTVVLYGPAG…LEKEEEEDRD (320 aa)) is the NACHT domain. 213–220 (GPAGLGKT) provides a ligand contact to ATP. The residue at position 671 (serine 671) is a Phosphoserine. 8 LRR repeats span residues 812–832 (SLTCVNLSDNELLDEGAKLLY), 841–861 (FLQRLSLENCHLTEANCKDLA), 869–889 (ELTHLCLAKNPIGNTGVKFLC), 898–918 (KLQTLVLWNCDITSDGCCDLT), 926–946 (SLLCLDLGLNHIGVKGMKFLC), 955–976 (NLRCLWLWGCSIPPFSCEDLCS), 983–1003 (SLVTLDLGQNPLGSSGVKMLF), and 1010–1033 (SGTLRTLRLKIDDFNDELNKLLEE).

The protein belongs to the NLRP family. Interacts with CHUK. Interacts with IKBKB. Interacts with IKBKG. Interacts with MEFV. Interacts with PYCARD. Interacts (via pyrin domain) with PYDC2. Interacts with CARD8. As to expression, expressed at high levels in lung, placenta and thymus and at lower levels in ovary, intestine and brain. Highly abundant in oocytes and early embryos, however poorly expressed in somatic tissues such as brain, kidney, liver and spinal cord.

It localises to the cytoplasm. Its function is as follows. Suppresses TNF- and CD40-induced NFKB1 activity at the level of the IKK complex, by inhibiting NFKBIA degradation induced by TNF. When associated with PYCARD, activates CASP1, leading to the secretion of mature pro-inflammatory cytokine IL1B. May be a component of the inflammasome, a protein complex which also includes PYCARD, CARD8 and CASP1 and whose function would be the activation of pro-inflammatory caspases. The sequence is that of NACHT, LRR and PYD domains-containing protein 2 (NLRP2) from Homo sapiens (Human).